Consider the following 192-residue polypeptide: MTFTLPQLPYALDALAPHVSKETLEYHYGKHHNTYVTNLNKLIPGTEFESMTLEEIIMKAKGGIFNNAAQVWNHTFYWHSMSPNGGGEPKGRLAEAINKSFGSFAAFKEQFSQTAATTFGSGWAWLVQDQSGALKIINTSNAGTPMTEGLNALLTCDVWEHAYYIDYRNRRPDYIEAFWSLVNWDFASSNLK.

4 residues coordinate Fe cation: H27, H74, D157, and H161.

Belongs to the iron/manganese superoxide dismutase family. In terms of assembly, homodimer. Requires Fe cation as cofactor.

The enzyme catalyses 2 superoxide + 2 H(+) = H2O2 + O2. Functionally, destroys superoxide anion radicals which are normally produced within the cells and which are toxic to biological systems. This chain is Superoxide dismutase [Fe] (sodB), found in Legionella pneumophila subsp. pneumophila (strain Philadelphia 1 / ATCC 33152 / DSM 7513).